Reading from the N-terminus, the 311-residue chain is Putative ribose-phosphate pyrophosphokinase 2 (311 aa).

Residues Asp38–Glu40 and Arg97–Gln98 each bind ATP. Mg(2+) contacts are provided by His131 and Asp171. D-ribose 5-phosphate is bound at residue Asp219.

This sequence belongs to the ribose-phosphate pyrophosphokinase family. Class I subfamily. Homohexamer. Mg(2+) is required as a cofactor.

The protein resides in the cytoplasm. It carries out the reaction D-ribose 5-phosphate + ATP = 5-phospho-alpha-D-ribose 1-diphosphate + AMP + H(+). It participates in metabolic intermediate biosynthesis; 5-phospho-alpha-D-ribose 1-diphosphate biosynthesis; 5-phospho-alpha-D-ribose 1-diphosphate from D-ribose 5-phosphate (route I): step 1/1. Its function is as follows. Involved in the biosynthesis of the central metabolite phospho-alpha-D-ribosyl-1-pyrophosphate (PRPP) via the transfer of pyrophosphoryl group from ATP to 1-hydroxyl of ribose-5-phosphate (Rib-5-P). The sequence is that of Putative ribose-phosphate pyrophosphokinase 2 from Listeria innocua serovar 6a (strain ATCC BAA-680 / CLIP 11262).